Reading from the N-terminus, the 432-residue chain is Adenylosuccinate synthetase (432 aa).

Residues 13 to 19 and 41 to 43 contribute to the GTP site; these read GDEGKGK and GHT. The Proton acceptor role is filled by D14. Mg(2+) contacts are provided by D14 and G41. IMP is bound by residues 14–17, 39–42, T130, R144, Q225, T240, and R304; these read DEGK and NAGH. The active-site Proton donor is the H42. 300 to 306 provides a ligand contact to substrate; it reads AVTGRPR. GTP is bound by residues R306, 332-334, and 415-417; these read KLD and STG.

This sequence belongs to the adenylosuccinate synthetase family. As to quaternary structure, homodimer. Mg(2+) serves as cofactor.

It is found in the cytoplasm. It carries out the reaction IMP + L-aspartate + GTP = N(6)-(1,2-dicarboxyethyl)-AMP + GDP + phosphate + 2 H(+). It functions in the pathway purine metabolism; AMP biosynthesis via de novo pathway; AMP from IMP: step 1/2. In terms of biological role, plays an important role in the de novo pathway of purine nucleotide biosynthesis. Catalyzes the first committed step in the biosynthesis of AMP from IMP. The sequence is that of Adenylosuccinate synthetase from Mannheimia succiniciproducens (strain KCTC 0769BP / MBEL55E).